A 784-amino-acid chain; its full sequence is MVRSISSVLAKEESENGSPIPALEEGSVYHVSLKSEGVSPFSDRIQLNYLYDGKTFSDPSNLNIHQQEACLINELLNAFMGMEGVFVHLQDMKASSEFETIIMPPSFYILPGFDLGIKDIASEMLEMGSHYLSITAFIESRSHFEYGFVNHALCAALRKFVMDYVVLIMQCENQSRIDPNFSLQTLRLYTLPTSRSLRQVYLILRDLLLSMEKNASSSDDLGLSNIDDLLEQLNEGNDISHVVNATRSKKKVCKGGQVISFLTESLTKYAGDPVARKILTYLLREASRPYTKMLNEWIHLGLVNDPYDEFMIKIHKGITSMQLDEDYTDEYWEKRYVIREDQVPPQLLDLQNKVLFAGKYLNVVLECRKGVNNLASLNAKDDTQNQLLWPSTFDDDNFTLNIMNAYVYANESLLQLLQSSQSLYAHLYSLKHYFFLDQSDFFTTFLDNAQHELRKPAKYISITKLQSQLDLALRQPGTITATDPHKEYVTVEVNQTSLIDWLMHIVSISGLEEGTSSQGNEVWNESITKQADVGNETRNFESEHNRSTQGTSKVGSDKDINGFETMQLCYKVPFPLSLILSRKAIIRYQLLFRYFLLLRHVEMQLENSWVQHSKNSAWRLNSSNAKIEQWKRNSWLLRTRMLSFVQKIIYYTTSEVIETHWGKFMGELENARTVDNLMQEHIDFLDTCLKECMLTNSRLLKVQSKLLNTCAMFASYTSTFTRSLYLLENSEESFDEGRMDKMEEILRRYEDSFSRHLKSLVNACNYFASTETAALLSLVMKLTG.

The protein belongs to the TUBGCP family. Part of the gamma-tubulin complex. Interacts with mcp6. Interacts with mto1. Interacts with mto2.

The protein resides in the cytoplasm. The protein localises to the cytoskeleton. It is found in the microtubule organizing center. It localises to the spindle pole body. In terms of biological role, component of the gamma tubule complex that is required for the regulation of both interphase microtubules and mitotic bipolar spindles. The chain is Spindle pole body component alp4 (alp4) from Schizosaccharomyces pombe (strain 972 / ATCC 24843) (Fission yeast).